A 100-amino-acid chain; its full sequence is Urease subunit gamma (100 aa).

Belongs to the urease gamma subunit family. As to quaternary structure, heterotrimer of UreA (gamma), UreB (beta) and UreC (alpha) subunits. Three heterotrimers associate to form the active enzyme.

It is found in the cytoplasm. It catalyses the reaction urea + 2 H2O + H(+) = hydrogencarbonate + 2 NH4(+). It participates in nitrogen metabolism; urea degradation; CO(2) and NH(3) from urea (urease route): step 1/1. The chain is Urease subunit gamma from Staphylococcus xylosus.